The chain runs to 188 residues: Protein GrpE 2 (188 aa).

Basic and acidic residues predominate over residues 1 to 29 (MDNQEKKTNYQNTDKENDLEKNKEKKNDE). A disordered region spans residues 1 to 33 (MDNQEKKTNYQNTDKENDLEKNKEKKNDESIFQ).

This sequence belongs to the GrpE family. In terms of assembly, homodimer.

It is found in the cytoplasm. In terms of biological role, participates actively in the response to hyperosmotic and heat shock by preventing the aggregation of stress-denatured proteins, in association with DnaK and GrpE. It is the nucleotide exchange factor for DnaK and may function as a thermosensor. Unfolded proteins bind initially to DnaJ; upon interaction with the DnaJ-bound protein, DnaK hydrolyzes its bound ATP, resulting in the formation of a stable complex. GrpE releases ADP from DnaK; ATP binding to DnaK triggers the release of the substrate protein, thus completing the reaction cycle. Several rounds of ATP-dependent interactions between DnaJ, DnaK and GrpE are required for fully efficient folding. The chain is Protein GrpE 2 from Buchnera aphidicola subsp. Schizaphis graminum (strain Sg).